The sequence spans 218 residues: Large ribosomal subunit protein uL3 (218 aa).

Positions 124–162 (KRHGFSRGPMTHGSKNHREPGSTGAGTTPGRIYPGKRMA) are disordered.

It belongs to the universal ribosomal protein uL3 family. As to quaternary structure, part of the 50S ribosomal subunit. Forms a cluster with proteins L14 and L19.

Its function is as follows. One of the primary rRNA binding proteins, it binds directly near the 3'-end of the 23S rRNA, where it nucleates assembly of the 50S subunit. The polypeptide is Large ribosomal subunit protein uL3 (Synechococcus sp. (strain CC9605)).